An 80-amino-acid chain; its full sequence is Defensin-like protein 2 (80 aa).

A signal peptide spans 1–29 (MAKFASIIVLLFVALVVFAAFEEPTMVEA). A Pyrrolidone carboxylic acid modification is found at Gln-30. 4 cysteine pairs are disulfide-bonded: Cys-33–Cys-80, Cys-44–Cys-65, Cys-50–Cys-74, and Cys-54–Cys-76.

This sequence belongs to the DEFL family.

The protein resides in the secreted. Possesses antifungal activity sensitive to inorganic cations. Induces potential changes in fungal membranes and increased K(+) efflux and Ca(2+) uptake. The protein is Defensin-like protein 2 (AFP2) of Raphanus sativus (Radish).